We begin with the raw amino-acid sequence, 299 residues long: Taste receptor type 2 member 5 (299 aa).

A topological domain (extracellular) is located at residue M1. Residues 2-22 traverse the membrane as a helical segment; it reads LSAGLGLLMLVAVVEFLIGLI. Residues 23–45 lie on the Cytoplasmic side of the membrane; sequence GNGVLVVWSFREWIRKFSWSSYN. The helical transmembrane segment at 46–66 threads the bilayer; it reads LIILGLAGCRFVLQWLIILDL. The Extracellular portion of the chain corresponds to 67 to 82; it reads SLFPLFQSSRWLRYLS. Residues 83–103 traverse the membrane as a helical segment; the sequence is IFWVLVSQASLWFATFLSVFY. Residues 104-127 are Cytoplasmic-facing; that stretch reads CKKITTFDHPAYLWLKQRAYNLSL. A helical membrane pass occupies residues 128–148; that stretch reads WCLLGYFIINLLLTVQIGLMF. The Extracellular segment spans residues 149–175; it reads YHPPQGNSSIRYPFESWQYLYAFRLNS. N155 is a glycosylation site (N-linked (GlcNAc...) asparagine). A helical membrane pass occupies residues 176–196; it reads GSYLPLMVFLVSSGMLIVSLY. Residues 197–223 lie on the Cytoplasmic side of the membrane; sequence THHKKMKVHSAGRRDVRAKAHITALKS. A helical membrane pass occupies residues 224-244; the sequence is LGCFLLLHLVYIMASPFSIAS. Residues 245–253 are Extracellular-facing; sequence KTYPPDLTS. A helical membrane pass occupies residues 254–274; sequence VFIWETLMAAYPSLHSLILIM. Residues 275–299 are Cytoplasmic-facing; the sequence is GIPRVKQTCQKIXWKTVCARRCWGP.

It belongs to the G-protein coupled receptor T2R family.

The protein resides in the membrane. Functionally, receptor that may play a role in the perception of bitterness and is gustducin-linked. May play a role in sensing the chemical composition of the gastrointestinal content. The activity of this receptor may stimulate alpha gustducin, mediate PLC-beta-2 activation and lead to the gating of TRPM5. The sequence is that of Taste receptor type 2 member 5 (TAS2R5) from Pan troglodytes (Chimpanzee).